A 194-amino-acid chain; its full sequence is Protein GrpE (194 aa).

The segment covering 1-14 (MENTQENPTSQNPT) has biased composition (polar residues). Residues 1–50 (MENTQENPTSQNPTPADETARQAAEAAAPQQEAAANAATDSPVNAEQSAL) form a disordered region. A compositionally biased stretch (low complexity) spans 21–38 (RQAAEAAAPQQEAAANAA).

This sequence belongs to the GrpE family. In terms of assembly, homodimer.

It is found in the cytoplasm. Functionally, participates actively in the response to hyperosmotic and heat shock by preventing the aggregation of stress-denatured proteins, in association with DnaK and GrpE. It is the nucleotide exchange factor for DnaK and may function as a thermosensor. Unfolded proteins bind initially to DnaJ; upon interaction with the DnaJ-bound protein, DnaK hydrolyzes its bound ATP, resulting in the formation of a stable complex. GrpE releases ADP from DnaK; ATP binding to DnaK triggers the release of the substrate protein, thus completing the reaction cycle. Several rounds of ATP-dependent interactions between DnaJ, DnaK and GrpE are required for fully efficient folding. This Paraburkholderia phytofirmans (strain DSM 17436 / LMG 22146 / PsJN) (Burkholderia phytofirmans) protein is Protein GrpE.